Reading from the N-terminus, the 422-residue chain is MIVRVSQTGPVDAAFPAPPSKSYTHRALIAGALALGRTRIARPLRAADTELTARGLEALGVPLEWLPGEIAVAGCSGTFPAAGEVTIDCGNSGTTLRLLTSAALLSQHPVVLTGSPRMLERPVGPLAGALRALGGDVAFTGQPGYPPIRISGRLRGGRATIDGSISSQFVSSILMAAPYAEEDVELTLPATPASRSYLDVTADVMLRFGAHIERQGYDRFRVESGRAYRGRDYRVEGDYSSASYLFAVAAVCGGRVAVTGLNPTSVQGDRRFLDALEAMGCSVAAGTDAVTVERTGDLKGIEIDMSSSPDTVQTLAAVAATAGSPTTITGTAHLQYKESDRVGVTADTLRRMGAGVEVTEDSLTITPAPLHGVAVDPHDDHRTAMAFAVLGLAVGGMAIRDPECVEKSFPGFWEALYGEGLL.

Lys21, Ser22, and Arg26 together coordinate 3-phosphoshikimate. Residue Lys21 participates in phosphoenolpyruvate binding. 2 residues coordinate phosphoenolpyruvate: Gly93 and Arg121. The 3-phosphoshikimate site is built by Ser166, Ser167, Gln168, Ser194, Asp310, and Lys337. Gln168 contacts phosphoenolpyruvate. The Proton acceptor role is filled by Asp310. Phosphoenolpyruvate-binding residues include Arg341, Arg382, and Lys407.

This sequence belongs to the EPSP synthase family. Monomer.

Its subcellular location is the cytoplasm. It carries out the reaction 3-phosphoshikimate + phosphoenolpyruvate = 5-O-(1-carboxyvinyl)-3-phosphoshikimate + phosphate. It participates in metabolic intermediate biosynthesis; chorismate biosynthesis. Functionally, catalyzes the transfer of the enolpyruvyl moiety of phosphoenolpyruvate (PEP) to the 5-hydroxyl of shikimate-3-phosphate (S3P) to produce enolpyruvyl shikimate-3-phosphate and inorganic phosphate. In Methanoculleus marisnigri (strain ATCC 35101 / DSM 1498 / JR1), this protein is 3-phosphoshikimate 1-carboxyvinyltransferase.